The sequence spans 252 residues: Chitooligosaccharide deacetylase (252 aa).

His-125 serves as a coordination point for Mg(2+).

This sequence belongs to the YdjC deacetylase family. ChbG subfamily. In terms of assembly, homodimer. Mg(2+) serves as cofactor.

The protein localises to the cytoplasm. It carries out the reaction N,N'-diacetylchitobiose + H2O = N-acetyl-beta-D-glucosaminyl-(1-&gt;4)-D-glucosamine + acetate. It catalyses the reaction diacetylchitobiose-6'-phosphate + H2O = N'-monoacetylchitobiose-6'-phosphate + acetate. It functions in the pathway glycan degradation; chitin degradation. Its function is as follows. Involved in the degradation of chitin. ChbG is essential for growth on the acetylated chitooligosaccharides chitobiose and chitotriose but is dispensable for growth on cellobiose and chitosan dimer, the deacetylated form of chitobiose. Deacetylation of chitobiose-6-P and chitotriose-6-P is necessary for both the activation of the chb promoter by the regulatory protein ChbR and the hydrolysis of phosphorylated beta-glucosides by the phospho-beta-glucosidase ChbF. Catalyzes the removal of only one acetyl group from chitobiose-6-P to yield monoacetylchitobiose-6-P, the inducer of ChbR and the substrate of ChbF. This Escherichia coli O157:H7 protein is Chitooligosaccharide deacetylase.